The sequence spans 825 residues: Breast cancer anti-estrogen resistance protein 3 (825 aa).

Alanine 2 bears the N-acetylalanine mark. 3 positions are modified to phosphoserine: serine 32, serine 78, and serine 83. The disordered stretch occupies residues 40-106 (DAYQDVSIHG…DRHGETFTFR (67 aa)). Residues 79-94 (PRQNSPVTQDGIQESP) show a composition bias toward polar residues. Basic and acidic residues predominate over residues 95–106 (WQDRHGETFTFR). The SH2 domain maps to 154-253 (WYHGRIPRQV…QSGAIIFQPI (100 aa)). Phosphoserine is present on residues serine 182 and serine 290. At lysine 334 the chain carries N6-methyllysine. Phosphoserine occurs at positions 358, 363, and 375. Residue arginine 442 is modified to Omega-N-methylarginine. At serine 471 the chain carries Phosphoserine. The 271-residue stretch at 548 to 818 (DPKVIAQHVL…TALSRKLEPP (271 aa)) folds into the Ras-GEF domain. The mediates the interaction with BCAR1/p130CAS stretch occupies residues 744–748 (LATAR).

As to quaternary structure, part of a complex comprised of PTPRA, BCAR1, BCAR3 (via SH2 domain) and SRC; the formation of the complex is dependent on integrin mediated-tyrosine phosphorylation of PTPRA. Within the complex, interacts (via SH2 domain) with PTPRA (when phosphorylated on 'Tyr-798'). Interacts (via Ras-GEF domain) with BCAR1. Interacts (via Ras-GEF domain) with NEDD9. Interacts with PTK2/FAK1. Interacts with PTPN1. Interacts (via SH2 domain) with EGFR (when tyrosine-phosphorylated). In terms of processing, phosphorylated on tyrosine residues. As to expression, ubiquitously expressed. Found in several cancer cell lines, but not in nonmalignant breast tissue.

It is found in the cytoplasm. Its subcellular location is the cell junction. The protein localises to the focal adhesion. Functionally, acts as an adapter protein downstream of several growth factor receptors to promote cell proliferation, migration, and redistribution of actin fibers. Specifically involved in INS/insulin signaling pathway by mediating MAPK1/ERK2-MAPK3/ERK1 activation and DNA synthesis. Promotes insulin-mediated membrane ruffling. In response to vasoconstrictor peptide EDN1, involved in the activation of RAP1 downstream of PTK2B via interaction with phosphorylated BCAR1. Inhibits cell migration and invasion via regulation of TGFB-mediated matrix digestion, actin filament rearrangement, and inhibition of invadopodia activity. May inhibit TGFB-SMAD signaling, via facilitating BCAR1 and SMAD2 and/or SMAD3 interaction. Regulates EGF-induced DNA synthesis. Required for the maintenance of ocular lens morphology and structural integrity, potentially via regulation of focal adhesion complex signaling. Acts upstream of PTPRA to regulate the localization of BCAR1 and PTPRA to focal adhesions, via regulation of SRC-mediated phosphorylation of PTPRA. Positively regulates integrin-induced tyrosine phosphorylation of BCAR1. Acts as a guanine nucleotide exchange factor (GEF) for small GTPases RALA, RAP1A and RRAS. However, in a contrasting study, lacks GEF activity towards RAP1. This chain is Breast cancer anti-estrogen resistance protein 3 (BCAR3), found in Homo sapiens (Human).